The chain runs to 350 residues: ATPase GET3 (350 aa).

26–33 (KGGVGKTT) lines the ATP pocket. Aspartate 57 is an active-site residue. 2 residues coordinate ATP: glutamate 243 and asparagine 270. Zn(2+)-binding residues include cysteine 282 and cysteine 285.

It belongs to the arsA ATPase family. In terms of assembly, homodimer. Component of the Golgi to ER traffic (GET) complex, which is composed of GET1, GET2 and GET3. Within the complex, GET1 and GET2 form a heterotetramer which is stabilized by phosphatidylinositol binding and which binds to the GET3 homodimer. Interacts with the chloride channel protein GEF1.

It localises to the cytoplasm. Its subcellular location is the endoplasmic reticulum. The protein resides in the golgi apparatus. Its function is as follows. ATPase required for the post-translational delivery of tail-anchored (TA) proteins to the endoplasmic reticulum. Recognizes and selectively binds the transmembrane domain of TA proteins in the cytosol. This complex then targets to the endoplasmic reticulum by membrane-bound receptors GET1 and GET2, where the tail-anchored protein is released for insertion. This process is regulated by ATP binding and hydrolysis. ATP binding drives the homodimer towards the closed dimer state, facilitating recognition of newly synthesized TA membrane proteins. ATP hydrolysis is required for insertion. Subsequently, the homodimer reverts towards the open dimer state, lowering its affinity for the GET1-GET2 receptor, and returning it to the cytosol to initiate a new round of targeting. Cooperates with the HDEL receptor ERD2 to mediate the ATP-dependent retrieval of resident ER proteins that contain a C-terminal H-D-E-L retention signal from the Golgi to the ER. Involved in low-level resistance to the oxyanions arsenite and arsenate, and in heat tolerance. This chain is ATPase GET3, found in Candida dubliniensis (strain CD36 / ATCC MYA-646 / CBS 7987 / NCPF 3949 / NRRL Y-17841) (Yeast).